The chain runs to 184 residues: ATP synthase subunit b, chloroplastic (184 aa).

Residues leucine 27–leucine 49 form a helical membrane-spanning segment.

This sequence belongs to the ATPase B chain family. In terms of assembly, F-type ATPases have 2 components, F(1) - the catalytic core - and F(0) - the membrane proton channel. F(1) has five subunits: alpha(3), beta(3), gamma(1), delta(1), epsilon(1). F(0) has four main subunits: a(1), b(1), b'(1) and c(10-14). The alpha and beta chains form an alternating ring which encloses part of the gamma chain. F(1) is attached to F(0) by a central stalk formed by the gamma and epsilon chains, while a peripheral stalk is formed by the delta, b and b' chains.

The protein resides in the plastid. The protein localises to the chloroplast thylakoid membrane. Its function is as follows. F(1)F(0) ATP synthase produces ATP from ADP in the presence of a proton or sodium gradient. F-type ATPases consist of two structural domains, F(1) containing the extramembraneous catalytic core and F(0) containing the membrane proton channel, linked together by a central stalk and a peripheral stalk. During catalysis, ATP synthesis in the catalytic domain of F(1) is coupled via a rotary mechanism of the central stalk subunits to proton translocation. Functionally, component of the F(0) channel, it forms part of the peripheral stalk, linking F(1) to F(0). The chain is ATP synthase subunit b, chloroplastic from Phalaenopsis aphrodite subsp. formosana (Moth orchid).